Consider the following 439-residue polypeptide: Trigger factor (439 aa).

The PPIase FKBP-type domain maps to 162–247 (GDTVTIDYVG…IHEVKAKQLP (86 aa)).

This sequence belongs to the FKBP-type PPIase family. Tig subfamily.

The protein localises to the cytoplasm. The enzyme catalyses [protein]-peptidylproline (omega=180) = [protein]-peptidylproline (omega=0). In terms of biological role, involved in protein export. Acts as a chaperone by maintaining the newly synthesized protein in an open conformation. Functions as a peptidyl-prolyl cis-trans isomerase. The protein is Trigger factor of Lactobacillus delbrueckii subsp. bulgaricus (strain ATCC 11842 / DSM 20081 / BCRC 10696 / JCM 1002 / NBRC 13953 / NCIMB 11778 / NCTC 12712 / WDCM 00102 / Lb 14).